The following is a 99-amino-acid chain: Small ribosomal subunit protein uS14m (99 aa).

It belongs to the universal ribosomal protein uS14 family.

Its subcellular location is the mitochondrion. The sequence is that of Small ribosomal subunit protein uS14m (RPS14) from Prototheca wickerhamii.